Here is a 75-residue protein sequence, read N- to C-terminus: Sec-independent protein translocase protein TatA (75 aa).

The helical transmembrane segment at 1–21 threads the bilayer; that stretch reads MFGLSPAQLIILLVVILLIFG.

Belongs to the TatA/E family. In terms of assembly, the Tat system comprises two distinct complexes: a TatABC complex, containing multiple copies of TatA, TatB and TatC subunits, and a separate TatA complex, containing only TatA subunits. Substrates initially bind to the TatABC complex, which probably triggers association of the separate TatA complex to form the active translocon.

The protein resides in the cell inner membrane. In terms of biological role, part of the twin-arginine translocation (Tat) system that transports large folded proteins containing a characteristic twin-arginine motif in their signal peptide across membranes. TatA could form the protein-conducting channel of the Tat system. The polypeptide is Sec-independent protein translocase protein TatA (Haemophilus influenzae (strain PittEE)).